Consider the following 216-residue polypeptide: Probable glutamine ABC transporter permease protein GlnM (216 aa).

An ABC transmembrane type-1 domain is found at 17–205; it reads FYHTLLASVI…VLTIPLSIGV (189 aa). The next 5 membrane-spanning stretches (helical) occupy residues 21–41, 63–83, 85–105, 132–152, and 181–201; these read LLAS…VAVM, IPLL…GLRL, GFQA…AEAI, LHII…NQFL, and LVVF…TIPL.

It belongs to the binding-protein-dependent transport system permease family. The complex is composed of two ATP-binding proteins (GlnQ), two transmembrane proteins (GlnM and GlnP) and a solute-binding protein (GlnH).

It localises to the cell membrane. Functionally, part of the ABC transporter complex GlnHMPQ involved in glutamine transport. Probably responsible for the translocation of the substrate across the membrane. The sequence is that of Probable glutamine ABC transporter permease protein GlnM (glnM) from Bacillus subtilis (strain 168).